The following is a 288-amino-acid chain: Purine nucleoside phosphorylase (288 aa).

65–66 serves as a coordination point for phosphate; that stretch reads RN. Met201 contacts substrate. Residue Thr202 coordinates phosphate.

This sequence belongs to the PNP/MTAP phosphorylase family. MTAP subfamily. As to quaternary structure, homotrimer.

It is found in the cytoplasm. The protein resides in the nucleus. The enzyme catalyses a purine D-ribonucleoside + phosphate = a purine nucleobase + alpha-D-ribose 1-phosphate. The protein operates within purine metabolism; purine nucleoside salvage. Its function is as follows. Purine nucleoside phosphorylase involved in purine salvage. This is Purine nucleoside phosphorylase from Drosophila pseudoobscura pseudoobscura (Fruit fly).